The primary structure comprises 545 residues: MSKTTKKFNSLCIDLPRDLSLEIYQSIASVATGSGDPHSDDFTAIAYLRDELLTKHPTLGSGNDEATRRTLAIAKLREANGDRGQINREGFLHDKSLSWDPDVLQTSIRSLIGNLLSGYRSSLFGQCTFSNGAPMGHKLQDAAPYKKFAEQATVTPRALRAALLVRDQCAPWIRHAVRYNESYEFRLVVGNGVFTVPKNNKIDRAACKEPDMNMYLQKGVGAFIRRRLKSVGIDLNDQSINQRLAQQGSVDGSLATIDLSSASDSISDRLVWSFLPPELYSYLDRIRSHYGIVDGETIRWELFSTMGNGFTFELESMIFWAIVKATQIHFGNAGTIGIYGDDIICPSEIAPRVLEALAYYGFKPNLRKTFVSGLFRESCGAHFYRGVDVKPFYIKKPVDNLFALMLILNRLRGWGVVGGMSDPRLYKVWVRLSSQVPSMFFGGTDLAADYYVVSPPTAVSVYTKTPYGRLLADTRTSGFRLARIARERKFFSEKHDSGRYIAWFHTGGEITDSMKSAGVRVIRTSEWLTPVPTFPQECGPASSPR.

Positions 243-373 constitute a RdRp catalytic domain; the sequence is RLAQQGSVDG…PNLRKTFVSG (131 aa).

In terms of assembly, part of the viral RNA-dependent RNA polymerase complex, the other subunits are probably the host ribosomal protein S1, EF-Tu and EF-Ts.

It carries out the reaction RNA(n) + a ribonucleoside 5'-triphosphate = RNA(n+1) + diphosphate. In terms of biological role, this is the catalytic subunit of the viral RNA-dependent RNA polymerase complex. This complex is involved in viral RNA replication that produces (+)-stranded genomes via a complementary, (-)-stranded intermediate. The protein is RNA-directed RNA polymerase beta chain of Escherichia coli (Bacteriophage MS2).